The primary structure comprises 154 residues: MKLRDSLAENNSIRLQAEANTWQEAVKIGVDLLVAADVVEPRYYQAILDGVEQFGPYFVIAPGLAMPHGRPEEGVKKTGFSLVTLKKPLEFNHEDNDPVDILITMAAVDANTNQEVGIMQIVNLFEDEANFDRLRACRTAQEVLDLIDRTNAAA.

One can recognise a PTS EIIA type-2 domain in the interval 6–150 (SLAENNSIRL…QEVLDLIDRT (145 aa)). Histidine 68 (tele-phosphohistidine intermediate) is an active-site residue. Histidine 68 is modified (phosphohistidine).

It is found in the cytoplasm. In terms of biological role, the phosphoenolpyruvate-dependent sugar phosphotransferase system (sugar PTS), a major carbohydrate active transport system, catalyzes the phosphorylation of incoming sugar substrates concomitantly with their translocation across the cell membrane. The enzyme II UlaABC PTS system is involved in ascorbate transport. The sequence is that of Ascorbate-specific PTS system EIIA component (ulaC) from Salmonella paratyphi A (strain ATCC 9150 / SARB42).